The primary structure comprises 72 residues: Metallothionein-like protein type 2 (72 aa).

This sequence belongs to the metallothionein superfamily. Type 15 family.

In terms of biological role, metallothioneins have a high content of cysteine residues that bind various heavy metals. This is Metallothionein-like protein type 2 from Solanum lycopersicum (Tomato).